Reading from the N-terminus, the 228-residue chain is Small ribosomal subunit protein uS3 (228 aa).

The KH type-2 domain occupies Val39–Arg107.

The protein belongs to the universal ribosomal protein uS3 family. In terms of assembly, part of the 30S ribosomal subunit. Forms a tight complex with proteins S10 and S14.

In terms of biological role, binds the lower part of the 30S subunit head. Binds mRNA in the 70S ribosome, positioning it for translation. The protein is Small ribosomal subunit protein uS3 of Pseudomonas aeruginosa (strain UCBPP-PA14).